We begin with the raw amino-acid sequence, 210 residues long: Ribosomal RNA large subunit methyltransferase E (210 aa).

Residues G67, W69, D87, D103, and D128 each coordinate S-adenosyl-L-methionine. Catalysis depends on K168, which acts as the Proton acceptor.

The protein belongs to the class I-like SAM-binding methyltransferase superfamily. RNA methyltransferase RlmE family.

The protein localises to the cytoplasm. It catalyses the reaction uridine(2552) in 23S rRNA + S-adenosyl-L-methionine = 2'-O-methyluridine(2552) in 23S rRNA + S-adenosyl-L-homocysteine + H(+). Functionally, specifically methylates the uridine in position 2552 of 23S rRNA at the 2'-O position of the ribose in the fully assembled 50S ribosomal subunit. The sequence is that of Ribosomal RNA large subunit methyltransferase E from Psychrobacter sp. (strain PRwf-1).